A 221-amino-acid polypeptide reads, in one-letter code: Ribonuclease T (221 aa).

One can recognise an Exonuclease domain in the interval 20-194; the sequence is VVIDIETAGF…YDTLQTANLF (175 aa). Mg(2+)-binding residues include Asp-23, Glu-25, His-181, and Asp-186. The Proton donor/acceptor role is filled by His-181.

This sequence belongs to the RNase T family. In terms of assembly, homodimer. Mg(2+) serves as cofactor.

Functionally, trims short 3' overhangs of a variety of RNA species, leaving a one or two nucleotide 3' overhang. Responsible for the end-turnover of tRNA: specifically removes the terminal AMP residue from uncharged tRNA (tRNA-C-C-A). Also appears to be involved in tRNA biosynthesis. This Buchnera aphidicola subsp. Acyrthosiphon pisum (strain APS) (Acyrthosiphon pisum symbiotic bacterium) protein is Ribonuclease T.